Here is a 792-residue protein sequence, read N- to C-terminus: Ribonucleoside-diphosphate reductase large subunit (792 aa).

Substrate-binding positions include T200, 215–216, G246, 415–419, and 606–610; these read SC, NLCAE, and PTAGT. The cysteines at positions 216 and 431 are disulfide-linked. The active-site Proton acceptor is the N415. C417 (cysteine radical intermediate) is an active-site residue. Residue E419 is the Proton acceptor of the active site. The segment at 758–781 is disordered; that stretch reads SPPHSGMKQDGAWLPGPKNPEEES.

The protein belongs to the ribonucleoside diphosphate reductase large chain family. In terms of assembly, heterotetramer composed of a homodimer of the large subunit (R1) and a homodimer of the small subunit (R2). Larger multisubunit protein complex are also active, composed of (R1)n(R2)n.

The enzyme catalyses a 2'-deoxyribonucleoside 5'-diphosphate + [thioredoxin]-disulfide + H2O = a ribonucleoside 5'-diphosphate + [thioredoxin]-dithiol. Ribonucleoside-diphosphate reductase holoenzyme provides the precursors necessary for viral DNA synthesis. Allows virus growth in non-dividing cells, as well as reactivation from latency in infected hosts. Catalyzes the biosynthesis of deoxyribonucleotides from the corresponding ribonucleotides. The chain is Ribonucleoside-diphosphate reductase large subunit from Human herpesvirus 8 type P (isolate GK18) (HHV-8).